Here is a 201-residue protein sequence, read N- to C-terminus: Protein OPI10 homolog (201 aa).

The protein belongs to the OPI10 family.

This chain is Protein OPI10 homolog, found in Anopheles gambiae (African malaria mosquito).